Consider the following 433-residue polypeptide: 4-hydroxy-3-methylbut-2-en-1-yl diphosphate synthase (flavodoxin) (433 aa).

Polar residues predominate over residues 1-13 (MNKPETVTENSLA). The tract at residues 1–23 (MNKPETVTENSLASDVAGPAPRH) is disordered. Residues C314, C317, C360, and E367 each coordinate [4Fe-4S] cluster.

It belongs to the IspG family. [4Fe-4S] cluster is required as a cofactor.

It catalyses the reaction (2E)-4-hydroxy-3-methylbut-2-enyl diphosphate + oxidized [flavodoxin] + H2O + 2 H(+) = 2-C-methyl-D-erythritol 2,4-cyclic diphosphate + reduced [flavodoxin]. Its pathway is isoprenoid biosynthesis; isopentenyl diphosphate biosynthesis via DXP pathway; isopentenyl diphosphate from 1-deoxy-D-xylulose 5-phosphate: step 5/6. In terms of biological role, converts 2C-methyl-D-erythritol 2,4-cyclodiphosphate (ME-2,4cPP) into 1-hydroxy-2-methyl-2-(E)-butenyl 4-diphosphate. This chain is 4-hydroxy-3-methylbut-2-en-1-yl diphosphate synthase (flavodoxin), found in Bradyrhizobium sp. (strain ORS 278).